The following is a 140-amino-acid chain: ATP synthase epsilon chain, chloroplastic (140 aa).

Belongs to the ATPase epsilon chain family. In terms of assembly, F-type ATPases have 2 components, CF(1) - the catalytic core - and CF(0) - the membrane proton channel. CF(1) has five subunits: alpha(3), beta(3), gamma(1), delta(1), epsilon(1). CF(0) has three main subunits: a, b and c.

The protein resides in the plastid. It localises to the chloroplast thylakoid membrane. Functionally, produces ATP from ADP in the presence of a proton gradient across the membrane. The sequence is that of ATP synthase epsilon chain, chloroplastic from Panax ginseng (Korean ginseng).